The primary structure comprises 152 residues: Endoribonuclease YbeY (152 aa).

Positions 118, 122, and 128 each coordinate Zn(2+).

Belongs to the endoribonuclease YbeY family. The cofactor is Zn(2+).

The protein localises to the cytoplasm. Its function is as follows. Single strand-specific metallo-endoribonuclease involved in late-stage 70S ribosome quality control and in maturation of the 3' terminus of the 16S rRNA. The sequence is that of Endoribonuclease YbeY from Pelotomaculum thermopropionicum (strain DSM 13744 / JCM 10971 / SI).